The sequence spans 361 residues: Phospho-N-acetylmuramoyl-pentapeptide-transferase (361 aa).

Helical transmembrane passes span 27–47, 70–90, 97–117, 134–154, 167–187, 199–219, 236–256, 263–283, 288–308, and 338–358; these read ILAS…MIRW, GTPT…CLLW, SLWL…VDDY, YFWQ…NASL, TVTW…IVGS, GLAI…AYAS, TGEL…FLWY, VFMG…VAVV, LVLL…ILQV, and KVIV…LATL.

The protein belongs to the glycosyltransferase 4 family. MraY subfamily. Mg(2+) serves as cofactor.

It is found in the cell inner membrane. It carries out the reaction UDP-N-acetyl-alpha-D-muramoyl-L-alanyl-gamma-D-glutamyl-meso-2,6-diaminopimeloyl-D-alanyl-D-alanine + di-trans,octa-cis-undecaprenyl phosphate = di-trans,octa-cis-undecaprenyl diphospho-N-acetyl-alpha-D-muramoyl-L-alanyl-D-glutamyl-meso-2,6-diaminopimeloyl-D-alanyl-D-alanine + UMP. The protein operates within cell wall biogenesis; peptidoglycan biosynthesis. Its function is as follows. Catalyzes the initial step of the lipid cycle reactions in the biosynthesis of the cell wall peptidoglycan: transfers peptidoglycan precursor phospho-MurNAc-pentapeptide from UDP-MurNAc-pentapeptide onto the lipid carrier undecaprenyl phosphate, yielding undecaprenyl-pyrophosphoryl-MurNAc-pentapeptide, known as lipid I. This is Phospho-N-acetylmuramoyl-pentapeptide-transferase from Legionella pneumophila (strain Lens).